The sequence spans 138 residues: Small ribosomal subunit protein uS11c (138 aa).

A disordered region spans residues 1–22; that stretch reads MAKSIPRISSRRNGPIGSGKTV.

Belongs to the universal ribosomal protein uS11 family. As to quaternary structure, part of the 30S ribosomal subunit.

It localises to the plastid. This is Small ribosomal subunit protein uS11c from Cuscuta exaltata (Tall dodder).